Reading from the N-terminus, the 142-residue chain is Baculoviral IAP repeat-containing protein 5 (142 aa).

The BIR repeat unit spans residues 18–88 (RISTFKNWPF…KHSSGCAFLS (71 aa)). Residue S20 is modified to Phosphoserine; by AURKC. K23 bears the N6-acetyllysine mark. T34 carries the phosphothreonine; by CDK1 and CDK15 modification. T48 bears the Phosphothreonine mark. Residues C57, C60, H77, and C84 each contribute to the Zn(2+) site. 4 positions are modified to N6-acetyllysine: K90, K110, K112, and K115. T117 carries the phosphothreonine; by AURKB modification. K129 is subject to N6-acetyllysine.

The protein belongs to the IAP family. As to quaternary structure, monomer or homodimer. Exists as a homodimer in the apo state and as a monomer in the CPC-bound state. The monomer protects cells against apoptosis more efficiently than the dimer. Only the dimeric form is capable of enhancing tubulin stability in cells. When phosphorylated, interacts with LAMTOR5/HBXIP; the resulting complex binds pro-CASP9, as well as active CASP9, but much less efficiently. Component of the chromosomal passenger complex (CPC) composed of at least BIRC5/survivin, CDCA8/borealin, INCENP, AURKB or AURKC; in the complex forms a triple-helix bundle-based subcomplex with INCENP and CDCA8. Interacts with JTB. Interacts (via BIR domain) with histone H3 phosphorylated at 'Thr-3' (H3pT3). Interacts with EVI5. Interacts with GTP-bound RAN in both the S and M phases of the cell cycle. Interacts with USP9X. Interacts with tubulin. Interacts with BIRC2/c-IAP1. The acetylated form at Lys-129 interacts with STAT3. The monomeric form deacetylated at Lys-129 interacts with XPO1/CRM1. The monomeric form interacts with XIAP/BIRC4. Both the dimeric and monomeric form can interact with DIABLO/SMAC. Interacts with BIRC6/bruce. Interacts with FBXL7; this interaction facilitates the polyubiquitination and subsequent proteasomal degradation of BIRC5 by the SCF(FBXL7) E3 ubiquitin-protein ligase complex. Post-translationally, ubiquitinated by the Cul9-RING ubiquitin-protein ligase complex, leading to its degradation. Ubiquitination is required for centrosomal targeting. Deubiquitinated by USP35 or USP38; leading to stabilization. Acetylation at Lys-129 results in its homodimerization, while deacetylation promotes the formation of monomers which heterodimerize with XPO1/CRM1 which facilitates its nuclear export. The acetylated form represses STAT3 transactivation. The dynamic equilibrium between its acetylation and deacetylation at Lys-129 determines its interaction with XPO1/CRM1, its subsequent subcellular localization, and its ability to inhibit STAT3 transactivation. In terms of processing, in vitro phosphorylation at Thr-117 by AURKB prevents interaction with INCENP and localization to mitotic chromosomes. Phosphorylation at Thr-48 by CK2 is critical for its mitotic and anti-apoptotic activities. Phosphorylation at Thr-34 by CDK15 is critical for its anti-apoptotic activity. Phosphorylation at Ser-20 by AURKC is critical for regulation of proper chromosome alignment and segregation, and possibly cytokinesis.

The protein localises to the cytoplasm. The protein resides in the nucleus. It localises to the chromosome. It is found in the centromere. Its subcellular location is the cytoskeleton. The protein localises to the spindle. The protein resides in the kinetochore. It localises to the midbody. Multitasking protein that has dual roles in promoting cell proliferation and preventing apoptosis. Component of a chromosome passage protein complex (CPC) which is essential for chromosome alignment and segregation during mitosis and cytokinesis. Acts as an important regulator of the localization of this complex; directs CPC movement to different locations from the inner centromere during prometaphase to midbody during cytokinesis and participates in the organization of the center spindle by associating with polymerized microtubules. Involved in the recruitment of CPC to centromeres during early mitosis via association with histone H3 phosphorylated at 'Thr-3' (H3pT3) during mitosis. The complex with RAN plays a role in mitotic spindle formation by serving as a physical scaffold to help deliver the RAN effector molecule TPX2 to microtubules. May counteract a default induction of apoptosis in G2/M phase. The acetylated form represses STAT3 transactivation of target gene promoters. May play a role in neoplasia. Inhibitor of CASP3 and CASP7. Essential for the maintenance of mitochondrial integrity and function. This is Baculoviral IAP repeat-containing protein 5 (BIRC5) from Sus scrofa (Pig).